The sequence spans 415 residues: MFERSRYTIDQIDPEVFAAIQKENQRQEDHIELIASENYTSPAVMAAQGSQLTNKYAEGYPGKRYYGGCEYVDIVEQLAIDRVKQLFGAEAANVQPNSGSQANQGVYFAVLKPGDTIMGMSLAEGGHLTHGMALNMSGKWFNVVSYGLNAQEDIDYDALEKLAQEKKPKLIIAGASAFALRIDFERIGKVAKSIGAYFMVDMAHYAGLIAAGVYPNPVPHADFVTTTTHKSLRGPRGGVILMKAEHEKAINSSIFPGIQGGPLMHVIAGKAVAFKEALTPEFKAYQEQVVKNAAVLAETLIARGLRIVSGRTESHVMLVDLRAKNITGKEAERILGEAHLTVNKNAIPNDPEKPFVTSGIRVGSPAMTTRGFKEEEARIVGNLIADVLDNPHDAGNIASVREQVSALTKRFPVYG.

Residues Leu122 and 126–128 (GHL) each bind (6S)-5,6,7,8-tetrahydrofolate. Lys230 bears the N6-(pyridoxal phosphate)lysine mark.

The protein belongs to the SHMT family. Homodimer. Pyridoxal 5'-phosphate serves as cofactor.

It is found in the cytoplasm. It catalyses the reaction (6R)-5,10-methylene-5,6,7,8-tetrahydrofolate + glycine + H2O = (6S)-5,6,7,8-tetrahydrofolate + L-serine. It participates in one-carbon metabolism; tetrahydrofolate interconversion. Its pathway is amino-acid biosynthesis; glycine biosynthesis; glycine from L-serine: step 1/1. Catalyzes the reversible interconversion of serine and glycine with tetrahydrofolate (THF) serving as the one-carbon carrier. This reaction serves as the major source of one-carbon groups required for the biosynthesis of purines, thymidylate, methionine, and other important biomolecules. Also exhibits THF-independent aldolase activity toward beta-hydroxyamino acids, producing glycine and aldehydes, via a retro-aldol mechanism. The polypeptide is Serine hydroxymethyltransferase 1 (Cupriavidus pinatubonensis (strain JMP 134 / LMG 1197) (Cupriavidus necator (strain JMP 134))).